A 357-amino-acid polypeptide reads, in one-letter code: UDP-N-acetylglucosamine--N-acetylmuramyl-(pentapeptide) pyrophosphoryl-undecaprenol N-acetylglucosamine transferase (357 aa).

UDP-N-acetyl-alpha-D-glucosamine-binding positions include 14 to 16 (TGG), N120, R164, S194, and Q291.

It belongs to the glycosyltransferase 28 family. MurG subfamily.

The protein resides in the cell inner membrane. It carries out the reaction di-trans,octa-cis-undecaprenyl diphospho-N-acetyl-alpha-D-muramoyl-L-alanyl-D-glutamyl-meso-2,6-diaminopimeloyl-D-alanyl-D-alanine + UDP-N-acetyl-alpha-D-glucosamine = di-trans,octa-cis-undecaprenyl diphospho-[N-acetyl-alpha-D-glucosaminyl-(1-&gt;4)]-N-acetyl-alpha-D-muramoyl-L-alanyl-D-glutamyl-meso-2,6-diaminopimeloyl-D-alanyl-D-alanine + UDP + H(+). Its pathway is cell wall biogenesis; peptidoglycan biosynthesis. In terms of biological role, cell wall formation. Catalyzes the transfer of a GlcNAc subunit on undecaprenyl-pyrophosphoryl-MurNAc-pentapeptide (lipid intermediate I) to form undecaprenyl-pyrophosphoryl-MurNAc-(pentapeptide)GlcNAc (lipid intermediate II). The protein is UDP-N-acetylglucosamine--N-acetylmuramyl-(pentapeptide) pyrophosphoryl-undecaprenol N-acetylglucosamine transferase of Fusobacterium nucleatum subsp. nucleatum (strain ATCC 25586 / DSM 15643 / BCRC 10681 / CIP 101130 / JCM 8532 / KCTC 2640 / LMG 13131 / VPI 4355).